The sequence spans 501 residues: Uridine kinase (501 aa).

Ser17 is subject to Phosphoserine. ATP is bound at residue 63-70 (GASGSGKT). Ser276 is modified (phosphoserine).

It belongs to the uridine kinase family.

It is found in the cytoplasm. The protein localises to the nucleus. The enzyme catalyses uridine + ATP = UMP + ADP + H(+). It catalyses the reaction cytidine + ATP = CMP + ADP + H(+). The protein operates within pyrimidine metabolism; CTP biosynthesis via salvage pathway; CTP from cytidine: step 1/3. It participates in pyrimidine metabolism; UMP biosynthesis via salvage pathway; UMP from uridine: step 1/1. Catalyzes the conversion of uridine into UMP and cytidine into CMP in the pyrimidine salvage pathway. The protein is Uridine kinase (URK1) of Saccharomyces cerevisiae (strain ATCC 204508 / S288c) (Baker's yeast).